Consider the following 309-residue polypeptide: Short-chain dehydrogenase/reductase ARMGADRAFT_1048226 (309 aa).

NADP(+)-binding residues include Lys-64, Asp-86, Asn-113, and Lys-145. Ser-167 (proton donor) is an active-site residue. NADP(+)-binding residues include Tyr-196 and Lys-200. Catalysis depends on Tyr-196, which acts as the Proton acceptor. The Lowers pKa of active site Tyr role is filled by Lys-200.

This sequence belongs to the short-chain dehydrogenases/reductases (SDR) family.

Its pathway is secondary metabolite biosynthesis. In terms of biological role, short-chain dehydrogenase/reductase, part of the gene cluster that mediates the biosynthesis of melleolides, a range of antifungal and phytotoxic polyketide derivatives composed of an orsellinic acid (OA) moiety esterified to various sesquiterpene alcohols. The first step in melleolides biosynthesis is performed by the delta(6)-protoilludene synthase PRO1 which catalyzes the cyclization of farnesyl diphosphate to protoilludene. The orsellinic acid synthase armB produces OA by condensing acetyl-CoA with 3 malonyl-CoA units in a three-round chain elongation reaction folowed by a C2-C7 ring closure. ArmB further catalyzes the trans-esterification of OA to the various sesquiterpene alcohols resulting from the hydroxylation of protoilludene. The melleolides cluster also includes 5 cytochrome P450 monooxygenases, 4 NAD(+)-dependent oxidoreductases, one flavin-dependent oxidoreductase, and one O-methyltransferase. The cytochrome P450 monooxygenases may be involved in protoilludene hydroxylation to elaborate melleolides with multiple alcohol groups, such as melleolide D, which carries alcohol functionalities at C-4, C-5, C-10, and C-13. The role of the NAD(+)-dependent enzymes remains unknown. Numerous melleolides, including arnamial, show 5'-O-methylation of the aromatic moiety which may be catalyzed by the methyltransferase encoded in the cluster. The flavin-dependent oxidoreductase might represent the dehydrogenase yielding the aldehyde in position 1 of arnamial and other melleolides. Finally, several halogenase localized outside of the cluster, are able to catalyze the transfer of a single chlorine atom to the melleolide backbone, resulting in a 6'-chloromelleolide product. This chain is Short-chain dehydrogenase/reductase ARMGADRAFT_1048226, found in Armillaria gallica (Bulbous honey fungus).